The following is a 144-amino-acid chain: MKTFSPTPENINREWFVVDAEDKILGRLATQIAHRLRGKHKPEFAPHMDNGDFIVVVNCEKIKVTGKKLDQKKYYNHSGYVGGLRETSLEKLLASKPEEVLLKAVRGMLPRNRLGRAMLTKLKVYRGTEHPHAAQKPTPLELTY.

This sequence belongs to the universal ribosomal protein uL13 family. Part of the 50S ribosomal subunit.

In terms of biological role, this protein is one of the early assembly proteins of the 50S ribosomal subunit, although it is not seen to bind rRNA by itself. It is important during the early stages of 50S assembly. This Nitratidesulfovibrio vulgaris (strain ATCC 29579 / DSM 644 / CCUG 34227 / NCIMB 8303 / VKM B-1760 / Hildenborough) (Desulfovibrio vulgaris) protein is Large ribosomal subunit protein uL13.